A 435-amino-acid polypeptide reads, in one-letter code: MAEAEEDCHSDAVRVGDEGHESPAERDLQAQLQMFRAQWMFELTPGVGSSNVESRPCRAGRSSILKAAADKGRQELAKEEKARELFLKAVEEEQNGALYEAIKFYRRAMQLVPDIEFKITYTRSPDGDGVGSSYIEDNEDASKMADLLSYFQQQLTFQESVLKLCQPELETSQTHISVLPMEVLMYIFRWVVSSDLDLRSLEQLSLVCRGFYICARDPEIWRLACLKVWGRSCMKLVPFSSWREMFLERPRVRFDGVYISKTTYIRQGEQSLDGFYRAWHQVEYYRYIRFFPDGHVMMLTTPEEPPSIVPRLRTRNTRTDAILLGHYRLSQDADNQTKVFAVITKKKEEKPLDHKYRYFRRVPVQEADHNFHVGLQLCSSGHQRFNKLIWIHHSCHITYRSTGETAVSAFDIDKMYTPLFFARVRSYTAFSERPL.

Positions 1-25 are disordered; sequence MAEAEEDCHSDAVRVGDEGHESPAE. Basic and acidic residues predominate over residues 7–25; it reads DCHSDAVRVGDEGHESPAE. Residues 82 to 115 form a TPR repeat; that stretch reads ARELFLKAVEEEQNGALYEAIKFYRRAMQLVPDI. At Ser124 the chain carries Phosphoserine. One can recognise an F-box domain in the interval 173 to 224; sequence QTHISVLPMEVLMYIFRWVVSSDLDLRSLEQLSLVCRGFYICARDPEIWRLA.

Part of the SCF (SKP1-CUL1-F-box) E3 ubiquitin-protein ligase complex SCF(FBXO9) composed of CUL1, SKP1, RBX1 and FBXO9. Interacts with TTI1 and TELO2; when TTI1 and TELO2 are phosphorylated by CK2.

It is found in the cytoplasm. It functions in the pathway protein modification; protein ubiquitination. In terms of biological role, substrate recognition component of a SCF (SKP1-CUL1-F-box protein) E3 ubiquitin-protein ligase complex which mediates the ubiquitination and subsequent proteasomal degradation of target proteins and plays a role in several biological processes such as cell cycle, cell proliferation, or maintenance of chromosome stability. Ubiquitinates mTORC1-bound TTI1 and TELO2 when they are phosphorylated by CK2 following growth factor deprivation, leading to their degradation. In contrast, does not mediate ubiquitination of TTI1 and TELO2 when they are part of the mTORC2 complex. As a consequence, mTORC1 is inactivated to restrain cell growth and protein translation, while mTORC2 is the activated due to the relief of feedback inhibition by mTORC1. Plays a role in maintaining epithelial cell survival by regulating the turn-over of chromatin modulator PRMT4 through ubiquitination and degradation by the proteasomal pathway. Also regulates PPARgamma stability by facilitating PPARgamma/PPARG ubiquitination and thereby plays a role in adipocyte differentiation. The polypeptide is F-box only protein 9 (Fbxo9) (Rattus norvegicus (Rat)).